The sequence spans 357 residues: Ubiquitin carboxyl-terminal hydrolase 2 (357 aa).

Residues threonine 19–alanine 351 enclose the USP domain. The active-site Nucleophile is the cysteine 28. Zn(2+)-binding residues include cysteine 177, cysteine 180, cysteine 228, and cysteine 231. Histidine 309 acts as the Proton acceptor in catalysis.

It belongs to the peptidase C19 family. USP2 subfamily. In terms of assembly, homooligomer.

The protein localises to the cytoplasm. Its subcellular location is the perinuclear region. It carries out the reaction Thiol-dependent hydrolysis of ester, thioester, amide, peptide and isopeptide bonds formed by the C-terminal Gly of ubiquitin (a 76-residue protein attached to proteins as an intracellular targeting signal).. Hydrolase that deubiquitinates polyubiquitinated target proteins such as MDM2, MDM4 and CCND1. Possesses both ubiquitin-specific peptidase and isopeptidase activities. May play a role in the regulation of the circadian clock. The protein is Ubiquitin carboxyl-terminal hydrolase 2 (USP2) of Gallus gallus (Chicken).